The sequence spans 1765 residues: Autophagy-related protein 2 (1765 aa).

3 disordered regions span residues 218 to 243, 1188 to 1224, and 1746 to 1765; these read SGEG…EDYD, GGSE…SHNI, and DPEE…KEAG. Acidic residues predominate over residues 226–243; it reads DNSEERDETESEESEDYD. Residues 1188–1206 show a composition bias toward polar residues; that stretch reads GGSENVSEHNNLSPGSSSP. Low complexity predominate over residues 1207–1221; that stretch reads ASVNTANSTRSAASS. Basic and acidic residues predominate over residues 1747 to 1765; it reads PEEKRRSEEKYKNTKKEAG.

Belongs to the ATG2 family.

It is found in the preautophagosomal structure membrane. It localises to the endoplasmic reticulum membrane. The catalysed reaction is a 1,2-diacyl-sn-glycero-3-phosphocholine(in) = a 1,2-diacyl-sn-glycero-3-phosphocholine(out). It carries out the reaction a 1,2-diacyl-sn-glycero-3-phospho-L-serine(in) = a 1,2-diacyl-sn-glycero-3-phospho-L-serine(out). It catalyses the reaction a 1,2-diacyl-sn-glycero-3-phosphoethanolamine(in) = a 1,2-diacyl-sn-glycero-3-phosphoethanolamine(out). Lipid transfer protein required for autophagosome completion and peroxisome degradation and peroxisome degradation. Tethers the edge of the isolation membrane (IM) to the endoplasmic reticulum (ER) and mediates direct lipid transfer from ER to IM for IM expansion. ATG2 binds to the ER exit site (ERES), which is the membrane source for autophagosome formation, using basic residues in its N-terminal region (NR) and to the expanding edge of the IM through its C-terminal region. The latter binding is assisted by an ATG18-PtdIns3P interaction. ATG2 then extracts phospholipids from the membrane source using its NR and transfers them to ATG9 to the IM through its predicted beta-sheet-rich structure for membrane expansion. The protein is Autophagy-related protein 2 (ATG2) of Pichia angusta (Yeast).